The chain runs to 158 residues: tRNA (cytidine(34)-2'-O)-methyltransferase (158 aa).

S-adenosyl-L-methionine is bound by residues Gly-103, Ile-123, and Ser-131.

It belongs to the class IV-like SAM-binding methyltransferase superfamily. RNA methyltransferase TrmH family. TrmL subfamily. Homodimer.

The protein localises to the cytoplasm. The enzyme catalyses cytidine(34) in tRNA + S-adenosyl-L-methionine = 2'-O-methylcytidine(34) in tRNA + S-adenosyl-L-homocysteine + H(+). It carries out the reaction 5-carboxymethylaminomethyluridine(34) in tRNA(Leu) + S-adenosyl-L-methionine = 5-carboxymethylaminomethyl-2'-O-methyluridine(34) in tRNA(Leu) + S-adenosyl-L-homocysteine + H(+). Methylates the ribose at the nucleotide 34 wobble position in the two leucyl isoacceptors tRNA(Leu)(CmAA) and tRNA(Leu)(cmnm5UmAA). Catalyzes the methyl transfer from S-adenosyl-L-methionine to the 2'-OH of the wobble nucleotide. The sequence is that of tRNA (cytidine(34)-2'-O)-methyltransferase from Ancylobacter novellus (strain ATCC 8093 / DSM 506 / JCM 20403 / CCM 1077 / IAM 12100 / NBRC 12443 / NCIMB 10456) (Starkeya novella).